The primary structure comprises 394 residues: Cell division protein FtsZ (394 aa).

Residues 21 to 25, 108 to 110, glutamate 139, arginine 143, and aspartate 187 contribute to the GTP site; these read GGGGN and GTG.

It belongs to the FtsZ family. Homodimer. Polymerizes to form a dynamic ring structure in a strictly GTP-dependent manner. Interacts directly with several other division proteins.

The protein localises to the cytoplasm. Its function is as follows. Essential cell division protein that forms a contractile ring structure (Z ring) at the future cell division site. The regulation of the ring assembly controls the timing and the location of cell division. One of the functions of the FtsZ ring is to recruit other cell division proteins to the septum to produce a new cell wall between the dividing cells. Binds GTP and shows GTPase activity. The chain is Cell division protein FtsZ from Azotobacter vinelandii.